Consider the following 439-residue polypeptide: Tubulin beta chain (439 aa).

GTP-binding residues include glutamine 11, glutamate 69, serine 138, glycine 142, threonine 143, glycine 144, asparagine 204, and asparagine 226. Glutamate 69 contributes to the Mg(2+) binding site.

The protein belongs to the tubulin family. In terms of assembly, dimer of alpha and beta chains. A typical microtubule is a hollow water-filled tube with an outer diameter of 25 nm and an inner diameter of 15 nM. Alpha-beta heterodimers associate head-to-tail to form protofilaments running lengthwise along the microtubule wall with the beta-tubulin subunit facing the microtubule plus end conferring a structural polarity. Microtubules usually have 13 protofilaments but different protofilament numbers can be found in some organisms and specialized cells. The cofactor is Mg(2+).

Its subcellular location is the cytoplasm. It localises to the cytoskeleton. Functionally, tubulin is the major constituent of microtubules, a cylinder consisting of laterally associated linear protofilaments composed of alpha- and beta-tubulin heterodimers. Microtubules grow by the addition of GTP-tubulin dimers to the microtubule end, where a stabilizing cap forms. Below the cap, tubulin dimers are in GDP-bound state, owing to GTPase activity of alpha-tubulin. This Encephalitozoon intestinalis (Microsporidian parasite) protein is Tubulin beta chain (TUB2).